A 443-amino-acid chain; its full sequence is Trimethylamine monooxygenase (443 aa).

FAD-binding residues include aspartate 37, glutamine 39, leucine 45, and tryptophan 46. The NADP(+) site is built by tryptophan 70 and asparagine 72. 2 residues coordinate FAD: asparagine 72 and valine 125. NADP(+) contacts are provided by tyrosine 170, serine 202, serine 203, serine 205, and arginine 226. FAD contacts are provided by glutamine 315 and threonine 318. Arginine 409 is a binding site for NADP(+).

The protein belongs to the FMO family. FAD serves as cofactor.

It carries out the reaction trimethylamine + NADPH + O2 = trimethylamine N-oxide + NADP(+) + H2O. Functionally, catalyzes the oxidation of trimethylamine (TMA) to produce trimethylamine N-oxide (TMAO). In vitro, has a broad substrate specificity, oxidizing many nitrogen- and sulfur-containing compounds, including dimethylamine (DMA), dimethylsulfide (DMS) and dimethylsulfoxide (DMSO). This is Trimethylamine monooxygenase from Pelagibacter ubique (strain HTCC1002).